Reading from the N-terminus, the 488-residue chain is Protein nucleotidyltransferase YdiU (488 aa).

ATP contacts are provided by G91, G93, R94, K114, D126, G127, R177, and R184. The active-site Proton acceptor is D253. Residues N254 and D263 each coordinate Mg(2+). D263 contributes to the ATP binding site.

It belongs to the SELO family. Mg(2+) serves as cofactor. Mn(2+) is required as a cofactor.

It catalyses the reaction L-seryl-[protein] + ATP = 3-O-(5'-adenylyl)-L-seryl-[protein] + diphosphate. The catalysed reaction is L-threonyl-[protein] + ATP = 3-O-(5'-adenylyl)-L-threonyl-[protein] + diphosphate. It carries out the reaction L-tyrosyl-[protein] + ATP = O-(5'-adenylyl)-L-tyrosyl-[protein] + diphosphate. The enzyme catalyses L-histidyl-[protein] + UTP = N(tele)-(5'-uridylyl)-L-histidyl-[protein] + diphosphate. It catalyses the reaction L-seryl-[protein] + UTP = O-(5'-uridylyl)-L-seryl-[protein] + diphosphate. The catalysed reaction is L-tyrosyl-[protein] + UTP = O-(5'-uridylyl)-L-tyrosyl-[protein] + diphosphate. In terms of biological role, nucleotidyltransferase involved in the post-translational modification of proteins. It can catalyze the addition of adenosine monophosphate (AMP) or uridine monophosphate (UMP) to a protein, resulting in modifications known as AMPylation and UMPylation. The chain is Protein nucleotidyltransferase YdiU from Bacillus cereus (strain G9842).